The chain runs to 158 residues: MGVFNVEDEITSVVAPAILYKALVTDADNLTPKVIDAIKSIEIVEGNGGAGTIKKLTFVEDGETKHVLHKVELVDVANLAYNYSIVGGVGFPDTVEKISFEAKLSAGPNGGSIAKLSVKYFTKGDAAPSEEQLKTDKAKGDGLFKALEGYCLAHPDYN.

It belongs to the BetVI family.

This chain is Disease resistance response protein Pi49 (DRR49A), found in Pisum sativum (Garden pea).